The chain runs to 56 residues: Small ribosomal subunit protein uS14 (56 aa).

The Zn(2+) site is built by Cys21, Cys24, Cys39, and Cys42.

The protein belongs to the universal ribosomal protein uS14 family. Zn(2+) is required as a cofactor.

The sequence is that of Small ribosomal subunit protein uS14 (RPS29) from Griffithsia japonica (Red alga).